The sequence spans 412 residues: Phospholipase A1-IIdelta (412 aa).

Residue Ala-2 is modified to N-acetylalanine. Ser-238 functions as the Acyl-ester intermediate in the catalytic mechanism. Catalysis depends on charge relay system residues Ser-238, Asp-297, and His-336.

This sequence belongs to the AB hydrolase superfamily. Lipase family. In terms of tissue distribution, expressed in leaves, stems, flowers and siliques, and, at low levels, in seeds and roots (at protein level).

The protein localises to the cytoplasm. Acylhydrolase that catalyzes the hydrolysis of phosphatidylcholine (PC) at the sn-1 position. High activity toward PC, medium activity toward monogalactosyldiacylglycerol (MGDG) and low activity toward triacylglycerol (TAG). Confers sensitivity to UV-B radiation probably by deesterifying membrane phospholipids. This Arabidopsis thaliana (Mouse-ear cress) protein is Phospholipase A1-IIdelta.